The chain runs to 143 residues: Transcriptional regulator MraZ (143 aa).

2 SpoVT-AbrB domains span residues 5–47 (EYRH…TQEE) and 76–119 (ATEC…SEDR).

Belongs to the MraZ family. In terms of assembly, forms oligomers.

It is found in the cytoplasm. The protein resides in the nucleoid. The sequence is that of Transcriptional regulator MraZ from Ligilactobacillus salivarius (strain UCC118) (Lactobacillus salivarius).